The primary structure comprises 453 residues: Na(+)/H(+) antiporter NhaA (453 aa).

Helical transmembrane passes span 27-47 (FLHIEALSGIVLLLAAASALI), 78-98 (LHFWVNDALMTIFFLVAGMEI), 114-134 (ILPIVAAIGGVCVPAIIYFIF), 143-163 (GWAVPTATDIAFALGILALLG), 172-192 (IILLSLAIIDDIIAVLIIAFF), 201-221 (GLLIAGGGIALVLFFQWIGLA), 222-242 (SAWLYILPGAIIWWGLMVTGV), 316-336 (PWVAYGIMPVFAFANAGVSFA), 346-366 (FLIVFGVVIGLFVGKPLGIIT), 385-405 (WAGILLIGFLAGIGFTMSIFV), and 421-441 (IGVLCGSGLSALIGLGYGFIY).

The protein belongs to the NhaA Na(+)/H(+) (TC 2.A.33) antiporter family.

It localises to the cell inner membrane. The enzyme catalyses Na(+)(in) + 2 H(+)(out) = Na(+)(out) + 2 H(+)(in). Functionally, na(+)/H(+) antiporter that extrudes sodium in exchange for external protons. The sequence is that of Na(+)/H(+) antiporter NhaA from Bartonella tribocorum (strain CIP 105476 / IBS 506).